We begin with the raw amino-acid sequence, 444 residues long: tRNA modification GTPase MnmE (444 aa).

Arg23, Glu82, and Lys121 together coordinate (6S)-5-formyl-5,6,7,8-tetrahydrofolate. Residues 216-365 (GTSIVLAGLP…LKQALQKWLN (150 aa)) enclose the TrmE-type G domain. Residue Asn226 participates in K(+) binding. GTP contacts are provided by residues 226-231 (NAGKSS), 245-251 (TDIPGTT), and 270-273 (DSAG). Ser230 serves as a coordination point for Mg(2+). Residues Thr245, Ile247, and Thr250 each contribute to the K(+) site. Residue Thr251 coordinates Mg(2+). Position 444 (Lys444) interacts with (6S)-5-formyl-5,6,7,8-tetrahydrofolate.

The protein belongs to the TRAFAC class TrmE-Era-EngA-EngB-Septin-like GTPase superfamily. TrmE GTPase family. As to quaternary structure, homodimer. Heterotetramer of two MnmE and two MnmG subunits. It depends on K(+) as a cofactor.

The protein localises to the cytoplasm. In terms of biological role, exhibits a very high intrinsic GTPase hydrolysis rate. Involved in the addition of a carboxymethylaminomethyl (cmnm) group at the wobble position (U34) of certain tRNAs, forming tRNA-cmnm(5)s(2)U34. In Chlamydia trachomatis serovar L2 (strain ATCC VR-902B / DSM 19102 / 434/Bu), this protein is tRNA modification GTPase MnmE.